Here is a 286-residue protein sequence, read N- to C-terminus: Bifunctional protein FolD (286 aa).

Residues 166–168 (GAS) and isoleucine 232 each bind NADP(+).

This sequence belongs to the tetrahydrofolate dehydrogenase/cyclohydrolase family. In terms of assembly, homodimer.

The catalysed reaction is (6R)-5,10-methylene-5,6,7,8-tetrahydrofolate + NADP(+) = (6R)-5,10-methenyltetrahydrofolate + NADPH. It carries out the reaction (6R)-5,10-methenyltetrahydrofolate + H2O = (6R)-10-formyltetrahydrofolate + H(+). It participates in one-carbon metabolism; tetrahydrofolate interconversion. Functionally, catalyzes the oxidation of 5,10-methylenetetrahydrofolate to 5,10-methenyltetrahydrofolate and then the hydrolysis of 5,10-methenyltetrahydrofolate to 10-formyltetrahydrofolate. This is Bifunctional protein FolD from Shewanella woodyi (strain ATCC 51908 / MS32).